A 323-amino-acid chain; its full sequence is MWQKNQTSLADFILEGLFDDSLTHLFLFSLTMVVFLIAVSGNTLTILLICIDPQLHTPMYFLLSQLSLMDLMHVSTIILKMATNYLSGKKSISFVGCATQHFLYLCLGGAECFLLAVMSYDRYVAICHPLRYAVLMNKKVGLMMAVMSWLGASVNSLIHMAILMHFPFCGPRKVYHFYCEFPAVVKLVCGDITVYETTVYISSILLLLPIFLISTSYVFILQSVIQMRSSGSKRNAFATCGSHLTVVSLWFGACIFSYMRPRSQCTLLQNKVGSVFYSIITPTLNSLIYTLRNKDVAKALRRVLRRDVITQCIQRLQLWLPRV.

At 1-25 (MWQKNQTSLADFILEGLFDDSLTHL) the chain is on the extracellular side. N-linked (GlcNAc...) asparagine glycosylation is present at N5. The helical transmembrane segment at 26-49 (FLFSLTMVVFLIAVSGNTLTILLI) threads the bilayer. Topologically, residues 50–57 (CIDPQLHT) are cytoplasmic. A helical transmembrane segment spans residues 58–79 (PMYFLLSQLSLMDLMHVSTIIL). At 80 to 100 (KMATNYLSGKKSISFVGCATQ) the chain is on the extracellular side. A disulfide bond links C97 and C189. The chain crosses the membrane as a helical span at residues 101 to 120 (HFLYLCLGGAECFLLAVMSY). The Cytoplasmic segment spans residues 121–139 (DRYVAICHPLRYAVLMNKK). A helical membrane pass occupies residues 140–158 (VGLMMAVMSWLGASVNSLI). Residues 159 to 195 (HMAILMHFPFCGPRKVYHFYCEFPAVVKLVCGDITVY) lie on the Extracellular side of the membrane. A helical transmembrane segment spans residues 196-218 (ETTVYISSILLLLPIFLISTSYV). Residues 219–235 (FILQSVIQMRSSGSKRN) are Cytoplasmic-facing. The chain crosses the membrane as a helical span at residues 236–258 (AFATCGSHLTVVSLWFGACIFSY). Over 259-271 (MRPRSQCTLLQNK) the chain is Extracellular. The helical transmembrane segment at 272-291 (VGSVFYSIITPTLNSLIYTL) threads the bilayer. Topologically, residues 292 to 323 (RNKDVAKALRRVLRRDVITQCIQRLQLWLPRV) are cytoplasmic.

This sequence belongs to the G-protein coupled receptor 1 family.

It localises to the cell membrane. Functionally, odorant receptor. In Homo sapiens (Human), this protein is Olfactory receptor 2AE1 (OR2AE1).